A 207-amino-acid chain; its full sequence is Superoxide dismutase [Mn] (207 aa).

Mn(2+) contacts are provided by His-28, His-76, Asp-160, and His-164.

The protein belongs to the iron/manganese superoxide dismutase family. Requires Mn(2+) as cofactor.

The enzyme catalyses 2 superoxide + 2 H(+) = H2O2 + O2. In terms of biological role, destroys superoxide anion radicals which are normally produced within the cells and which are toxic to biological systems. This is Superoxide dismutase [Mn] (sodA) from Mycobacterium intracellulare (strain ATCC 13950 / DSM 43223 / JCM 6384 / NCTC 13025 / 3600).